A 121-amino-acid polypeptide reads, in one-letter code: Small ribosomal subunit protein uS13 (121 aa).

Residues 91–121 are disordered; sequence HRRGLPVRGQKTKNNARTRKGPVKTVANKKK.

This sequence belongs to the universal ribosomal protein uS13 family. As to quaternary structure, part of the 30S ribosomal subunit. Forms a loose heterodimer with protein S19. Forms two bridges to the 50S subunit in the 70S ribosome.

Located at the top of the head of the 30S subunit, it contacts several helices of the 16S rRNA. In the 70S ribosome it contacts the 23S rRNA (bridge B1a) and protein L5 of the 50S subunit (bridge B1b), connecting the 2 subunits; these bridges are implicated in subunit movement. Contacts the tRNAs in the A and P-sites. This chain is Small ribosomal subunit protein uS13, found in Staphylococcus haemolyticus (strain JCSC1435).